A 588-amino-acid polypeptide reads, in one-letter code: uncharacterized protein (588 aa).

The next 7 helical transmembrane spans lie at 14–34, 49–69, 78–98, 184–204, 235–255, 257–274, and 275–292; these read FLLFLPYFIGLLFLGFIKGIV, AVILSLLPVHIVWTFYSIVSA, IFLCLCLPAAIILWPIVGILG, ALVVSVLGILVDPPVISLVAI, VPIAGLAILLWPLAVTGAVIG, VISSIFLGAYAGVVSYQE, and SSFYYGLCYIVASVSIYD. S486 is subject to Phosphoserine. The disordered stretch occupies residues 566 to 588; sequence RKGSVNGSDQESQKGVSRNVDIV. The span at 570-581 shows a compositional bias: polar residues; it reads VNGSDQESQKGV.

The protein localises to the membrane. This is an uncharacterized protein from Arabidopsis thaliana (Mouse-ear cress).